The chain runs to 309 residues: Glutaminase (309 aa).

The substrate site is built by S65, N117, E162, N169, Y193, Y245, and V263.

The protein belongs to the glutaminase family. In terms of assembly, homotetramer.

The enzyme catalyses L-glutamine + H2O = L-glutamate + NH4(+). The chain is Glutaminase from Bacillus mycoides (strain KBAB4) (Bacillus weihenstephanensis).